The sequence spans 359 residues: Innexin inx2 (359 aa).

Over 1–22 (MFDVFGSVKGLLKLDSVCIDNN) the chain is Cytoplasmic. The helical transmembrane segment at 23–43 (LFRLHYKATVIILIAFSLLVT) threads the bilayer. The Extracellular segment spans residues 44–109 (SRQYIGDPID…KDEVKYHKYY (66 aa)). A helical membrane pass occupies residues 110 to 130 (QWVCFVLFFQAILFYIPRYLW). Residues 131–180 (KTWEGGRIKMLVLDLNSPVVNEQSKADRKKLLVDYFATNLHTQNFYAYRF) are Cytoplasmic-facing. A helical membrane pass occupies residues 181-201 (FICEALNFVNVVGQIYFMDLF). The Extracellular segment spans residues 202–266 (LDGEFTTYGS…VLPLNIVNEK (65 aa)). Residues 267 to 287 (IYVFLWFWFVILSVLTGIGLV) traverse the membrane as a helical segment. The Cytoplasmic segment spans residues 288–359 (YRLATAMGPQ…AKKLEGKEIV (72 aa)).

It belongs to the pannexin family. As to expression, widespread expression in embryo, in anterior and posterior row of neural precursors, midline precursors and in epithelial sheet of stomodeum.

Its subcellular location is the cell membrane. The protein localises to the cell junction. The protein resides in the gap junction. Its function is as follows. Structural components of the gap junctions. This is Innexin inx2 (inx2) from Schistocerca americana (American grasshopper).